The primary structure comprises 505 residues: MAKQPTALIILDGFANRESEHGNAVKQAHKPNFDRYYSKYPTTQIEASGLDVGLPEGQMGNSEVGHMNIGAGRIVYQSLTRINKSIADGDFFENDVLNNAVQHVNEHDSALHVFGLLSDGGVHSHYQHLFALLELAKQKGLDKVYVHAFLDGRDVDQKSALKYIEETEAKFKSLGVGEFASISGRYYAMDRDKRWDREQKAYNAIRNFEGPAYASAKEGVEANYANDLTDEFVEPFIVEGQNNGINDGDAVIFFNFRPDRAAQLSEVFTNKAFDGFKVEQVKDLFYATFTKYNDNVDTEVVFEKVDLTNTIGEVAQNNNLKQLRIAETEKYPHVTYFMSGGRNEEFEGERRRLIDSPKVATYDLKPEMSAYEVKDALLEELDKGDLDLIILNFANPDMVGHSGMLEPTIKAIEAVDECLGEVVDKILDMNGYAIITADHGNSDQVLTDDDQPMTTHTTNPVPVIVTKEGVTLRETGRLGDLAPTLLDLLNVGQPSDMTGESLIKH.

2 residues coordinate Mn(2+): Asp-12 and Ser-62. Ser-62 serves as the catalytic Phosphoserine intermediate. Residues His-123, 153–154 (RD), Arg-185, Arg-191, 257–260 (RPDR), and Lys-330 each bind substrate. The Mn(2+) site is built by Asp-397, His-401, Asp-438, His-439, and His-456.

This sequence belongs to the BPG-independent phosphoglycerate mutase family. In terms of assembly, monomer. The cofactor is Mn(2+).

The catalysed reaction is (2R)-2-phosphoglycerate = (2R)-3-phosphoglycerate. It functions in the pathway carbohydrate degradation; glycolysis; pyruvate from D-glyceraldehyde 3-phosphate: step 3/5. Its function is as follows. Catalyzes the interconversion of 2-phosphoglycerate and 3-phosphoglycerate. The sequence is that of 2,3-bisphosphoglycerate-independent phosphoglycerate mutase from Staphylococcus haemolyticus (strain JCSC1435).